The chain runs to 575 residues: Proline--tRNA ligase (575 aa).

The protein belongs to the class-II aminoacyl-tRNA synthetase family. ProS type 1 subfamily. Homodimer.

The protein resides in the cytoplasm. The enzyme catalyses tRNA(Pro) + L-proline + ATP = L-prolyl-tRNA(Pro) + AMP + diphosphate. Catalyzes the attachment of proline to tRNA(Pro) in a two-step reaction: proline is first activated by ATP to form Pro-AMP and then transferred to the acceptor end of tRNA(Pro). As ProRS can inadvertently accommodate and process non-cognate amino acids such as alanine and cysteine, to avoid such errors it has two additional distinct editing activities against alanine. One activity is designated as 'pretransfer' editing and involves the tRNA(Pro)-independent hydrolysis of activated Ala-AMP. The other activity is designated 'posttransfer' editing and involves deacylation of mischarged Ala-tRNA(Pro). The misacylated Cys-tRNA(Pro) is not edited by ProRS. The protein is Proline--tRNA ligase of Anaeromyxobacter sp. (strain Fw109-5).